The following is a 414-amino-acid chain: Gamma-glutamyl phosphate reductase (414 aa).

This sequence belongs to the gamma-glutamyl phosphate reductase family.

Its subcellular location is the cytoplasm. It carries out the reaction L-glutamate 5-semialdehyde + phosphate + NADP(+) = L-glutamyl 5-phosphate + NADPH + H(+). It participates in amino-acid biosynthesis; L-proline biosynthesis; L-glutamate 5-semialdehyde from L-glutamate: step 2/2. Its function is as follows. Catalyzes the NADPH-dependent reduction of L-glutamate 5-phosphate into L-glutamate 5-semialdehyde and phosphate. The product spontaneously undergoes cyclization to form 1-pyrroline-5-carboxylate. The sequence is that of Gamma-glutamyl phosphate reductase from Thermoanaerobacter sp. (strain X514).